The primary structure comprises 366 residues: Major outer membrane protein (366 aa).

A signal peptide spans 1–21 (MKKTLLATAIAGAMAASGAQA).

The protein belongs to the Gram-negative porin family. In terms of assembly, homotrimer.

It localises to the cell outer membrane. This is Major outer membrane protein from Halomonas elongata (strain ATCC 33173 / DSM 2581 / NBRC 15536 / NCIMB 2198 / 1H9).